A 97-amino-acid chain; its full sequence is Serine protease inhibitor Kazal-type 13 (97 aa).

The signal sequence occupies residues M1–A26. The Kazal-like domain occupies N36–E97. 3 disulfide bridges follow: C42–C78, C56–C75, and C64–C96.

As to expression, restricted to the epididymis, with highest levels in the initial segment, including epithelial cells, lumen, and sperm (at protein level). Localizes to the sperm heads, where it is restricted to the acrosomal region in epididymal spermatozoa, but not in testicular spermatozoa (at protein level).

It localises to the secreted. In terms of biological role, may be a serine protease inhibitor. Essential for sperm maturation and fertility. Inhibits sperm acrosome reaction, protecting sperm from premature reaction. The sequence is that of Serine protease inhibitor Kazal-type 13 (Spink13) from Rattus norvegicus (Rat).